The sequence spans 499 residues: Transcriptional regulator sdnM (499 aa).

The protein resides in the nucleus. It functions in the pathway antibiotic biosynthesis. Functionally, transcriptional regulator; part of the gene cluster that mediates the biosynthesis of sordarin and hypoxysordarin, glycoside antibiotics with a unique tetracyclic diterpene aglycone structure. First, the geranylgeranyl diphosphate synthase sdnC constructs GGDP from farnesyl diphosphate and isopentenyl diphosphate. The diterpene cyclase sdnA then catalyzes the cyclization of GGDP to afford cycloaraneosene. Cycloaraneosene is then hydroxylated four times by the putative cytochrome P450 monooxygenases sdnB, sdnE, sdnF and sdnH to give a hydroxylated cycloaraneosene derivative such as cycloaraneosene-8,9,13,19-tetraol. Although the order of the hydroxylations is unclear, at least C8, C9 and C13 of the cycloaraneosene skeleton are hydroxylated before the sordaricin formation. Dehydration of the 13-hydroxy group of the hydroxylated cycloaraneosene derivative might be catalyzed by an unassigned hypothetical protein such as sdnG and sdnP to construct the cyclopentadiene moiety. The FAD-dependent oxidoreductase sdnN is proposed to catalyze the oxidation at C9 of the hydroxylated cycloaraneosene derivative and also catalyze the Baeyer-Villiger oxidation to give the lactone intermediate. The presumed lactone intermediate would be hydrolyzed to give an acrolein moiety and a carboxylate moiety. Then, [4+2]cycloaddition would occur between the acrolein moiety and the cyclopentadiene moiety to give sordaricin. SdnN might also be involved in the [4+2]cycloaddition after the hypothesized oxidation to accommodate the oxidized product and prompt the [4+2]cycloaddition. GDP-6-deoxy-D-altrose may be biosynthesized from GDP-D-mannose by the putative GDP-mannose-4,6-dehydratase sdnI and the short-chain dehydrogenase sdnK. The glycosyltransferase sdnJ catalyzes the attachment of 6-deoxy-D-altrose onto the 19-hydroxy group of sordaricin to give 4'-O-demethylsordarin. The methyltransferase sdnD would complete the biosynthesis of sordarin. Sordarin can be further modified into hypoxysordarin. The unique acyl chain at the 3'-hydroxy group of hypoxysordarin would be constructed by an iterative type I PKS sdnO and the trans-acting polyketide methyltransferase sdnL. SdnL would be responsible for the introduction of an alpha-methyl group of the polyketide chain. Alternatively, the beta-lactamase-like protein sdnR might be responsible for the cleavage and transfer of the polyketide chain from the PKS sdnO to sordarin. Two putative cytochrome P450 monooxygenases, sdnQ and sdnT, might catalyze the epoxidations of the polyketide chain to complete the biosynthesis of hypoxysordarin. Transcriptional regulators sdnM and sdnS are presumably encoded for the transcriptional regulation of the expression of the sdn gene cluster. In Sordaria araneosa (Pleurage araneosa), this protein is Transcriptional regulator sdnM.